The primary structure comprises 272 residues: Probable ribonuclease HI_0526 (272 aa).

An N-terminal signal peptide occupies residues 1-23 (MKKLTSILSLIVLVILAIWQYFT). Catalysis depends on residues H148, E195, and H199.

This sequence belongs to the RNase T2 family.

The sequence is that of Probable ribonuclease HI_0526 from Haemophilus influenzae (strain ATCC 51907 / DSM 11121 / KW20 / Rd).